Reading from the N-terminus, the 195-residue chain is MTIICIDGIIGAGKSTVTHRLKKNLYKCYEEPIDKWTLLPNLYNDMKKYATPFQFQVLFSQYDQYLSFKDCKETVVVERCPWTSKNIFTSLMIENNLFDLSAIDTYNNLYERLSYQVDHFIYIKVDSEMAFERIKKRDRFAEQNISFDYLKSLENKYATSLATLSPSTVTIIDGSNTIEEVEFDVKTAINNFLSH.

8–16 (GIIGAGKST) is a binding site for ATP. Glu-31, Tyr-43, and Gln-54 together coordinate substrate. Glu-78 (proton acceptor) is an active-site residue. Substrate contacts are provided by Arg-79 and Glu-142.

The protein belongs to the DCK/DGK family.

This Acheta domesticus (House cricket) protein is Putative kinase protein 143R.